The sequence spans 1353 residues: ABC-type transporter MYCGRDRAFT_41235 (1353 aa).

The helical transmembrane segment at 40 to 60 (ASASLWNWFFFSWLNPLIAIG) threads the bilayer. Residue Asn121 is glycosylated (N-linked (GlcNAc...) asparagine). A run of 6 helical transmembrane segments spans residues 124-144 (VLVWFWVGGAMKLFADVATIT), 172-192 (IGQGFGMAIGLALLLASGVMA), 250-270 (FACGYFHATWTSVIQILICLG), 271-291 (LTIASLGPAALTGFGLMAILV), 364-384 (VALSFSVPTLAAVVSFVTYAA), and 397-417 (ALTLFMLLRTPLLLLPVAFGA). Residues 129–420 (WVGGAMKLFA…LPVAFGAAAD (292 aa)) form the ABC transmembrane type-1 1 domain. One can recognise an ABC transporter 1 domain in the interval 460-684 (YRVQDHSDEK…EGGQMRRVVE (225 aa)). Residue Asn481 is glycosylated (N-linked (GlcNAc...) asparagine). Residue 496 to 503 (GPVGAGKS) coordinates ATP. The segment at 687–720 (ASKSSAEEEEVEDGDLKDGVPSTDGGDASQTTSN) is disordered. The next 6 membrane-spanning stretches (helical) occupy residues 748-768 (PAFTLTFFILSMLIFQGGSIL), 796-816 (LGVSQAIGLLAMSSIFGFFIF), 864-882 (AFRMLLSTVAQVVGAVVLI), 888-907 (WFLLAVFVIVILYILTGMYY), 973-993 (LSVRLDLLGTCLVLLVGLIVV), and 1002-1022 (AQGGVALSYIVTVQAVFGFMI). In terms of domain architecture, ABC transmembrane type-1 2 spans 756–1030 (ILSMLIFQGG…MIRQSAEIEN (275 aa)). Residues 1070 to 1334 (IEMRDVVFTH…EGGHFRSLCS (265 aa)) enclose the ABC transporter 2 domain. An ATP-binding site is contributed by 1104–1111 (GRTGSGKS). Residues 1191–1200 (QSSAETLTSS) are compositionally biased toward polar residues. The tract at residues 1191–1223 (QSSAETLTSSDQEKSSPDDAAISPSSHSHSQHL) is disordered. A compositionally biased stretch (low complexity) spans 1208-1218 (DDAAISPSSHS).

The protein belongs to the ABC transporter superfamily. ABCC family. Conjugate transporter (TC 3.A.1.208) subfamily.

The protein localises to the cell membrane. Functionally, multidrug resistance protein; part of the gene cluster 14 that mediates the biosynthesis of a ferrichrome A-like siderophors which may contribute to organismal virulence. This chain is ABC-type transporter MYCGRDRAFT_41235, found in Zymoseptoria tritici (strain CBS 115943 / IPO323) (Speckled leaf blotch fungus).